Consider the following 117-residue polypeptide: Immunoglobulin heavy variable 3-5 (117 aa).

Positions methionine 1–serine 18 are cleaved as a signal peptide. The region spanning aspartate 19–arginine 117 is the Ig-like domain. A disulfide bridge links cysteine 40 with cysteine 115.

This chain is Immunoglobulin heavy variable 3-5, found in Mus musculus (Mouse).